The chain runs to 353 residues: Protein pelota homolog (353 aa).

Belongs to the eukaryotic release factor 1 family. Pelota subfamily. As to quaternary structure, monomer. The cofactor is a divalent metal cation.

The protein resides in the cytoplasm. Its function is as follows. May function in recognizing stalled ribosomes, interact with stem-loop structures in stalled mRNA molecules, and effect endonucleolytic cleavage of the mRNA. May play a role in the release non-functional ribosomes and degradation of damaged mRNAs. Has endoribonuclease activity. The polypeptide is Protein pelota homolog (Methanopyrus kandleri (strain AV19 / DSM 6324 / JCM 9639 / NBRC 100938)).